The primary structure comprises 71 residues: Phosphatidylinositol N-acetylglucosaminyltransferase subunit Y (71 aa).

Residues 1–5 (MIRSL) lie on the Cytoplasmic side of the membrane. The chain crosses the membrane as a helical span at residues 6–26 (PTMTVLIPLVSLAGLLYSASV). The Lumenal segment spans residues 27–44 (EEGFPEGCTSASSLCFYS). The chain crosses the membrane as a helical span at residues 45 to 65 (LLLPVTVPVYVFFHLWTWMGL). Residues 66–71 (KLFRHN) are Cytoplasmic-facing.

As to quaternary structure, component of the glycosylphosphatidylinositol-N-acetylglucosaminyltransferase (GPI-GnT) complex composed at least by PIGA, PIGC, PIGH, PIGP, PIGQ, PIGY and DPM2. Interacts directly with PIGA; this interaction regulates glycosylphosphatidylinositol-N-acetylglucosaminyltransferase activity. Does not interact with Ras proteins.

Its subcellular location is the endoplasmic reticulum membrane. It participates in glycolipid biosynthesis; glycosylphosphatidylinositol-anchor biosynthesis. Its function is as follows. Part of the glycosylphosphatidylinositol-N-acetylglucosaminyltransferase (GPI-GnT) complex that catalyzes the transfer of N-acetylglucosamine from UDP-N-acetylglucosamine to phosphatidylinositol and participates in the first step of GPI biosynthesis. May act by regulating the catalytic subunit PIGA. This is Phosphatidylinositol N-acetylglucosaminyltransferase subunit Y from Mus musculus (Mouse).